Reading from the N-terminus, the 324-residue chain is Mitochondrial oxaloacetate transport protein (324 aa).

Solcar repeat units lie at residues 20–111, 126–218, and 227–312; these read ISKF…IRSS, QSVG…AKNI, and DGPA…TMKL. 6 helical membrane passes run 26-46, 79-99, 132-152, 193-213, 233-253, and 284-305; these read FVAGGLAACIAVTVTNPIELI, GIKGLQKGLNAAYIYQIGLNG, VFSGAASGIIGAVIGSPLFLV, GIDAAILRTGAGSSVQLPIYN, LTASTISGLGVAVVMNPWDVI, and LYKGFAAQVFRIAPHTIMCLTF.

It belongs to the mitochondrial carrier (TC 2.A.29) family.

It localises to the mitochondrion inner membrane. The catalysed reaction is a dicarboxylate(in) + sulfate(out) = a dicarboxylate(out) + sulfate(in). The enzyme catalyses (2S)-2-isopropylmalate(in) + sulfate(out) = (2S)-2-isopropylmalate(out) + sulfate(in). It carries out the reaction (2R,3S)-3-isopropylmalate(in) + sulfate(out) = (2R,3S)-3-isopropylmalate(out) + sulfate(in). It catalyses the reaction malonate(in) + sulfate(out) = malonate(out) + sulfate(in). The catalysed reaction is oxaloacetate(in) + sulfate(out) = oxaloacetate(out) + sulfate(in). The enzyme catalyses thiosulfate(in) + sulfate(out) = thiosulfate(out) + sulfate(in). With respect to regulation, inhibited by alpha-keto isocaproate, an intermediate of leucine biosynthesis pathway. Functionally, antiporter that exchanges dicarboxylates and sulfur oxoanions across the inner membrane of mitochondria. Exports alpha-isopropylmalate from mitochondrial matrix to the cytosol, where it serves as a precursor for leucine biosynthesis. This is Mitochondrial oxaloacetate transport protein (OAC1) from Saccharomyces cerevisiae (strain ATCC 204508 / S288c) (Baker's yeast).